Consider the following 179-residue polypeptide: Pyridoxal 5'-phosphate synthase subunit PdxT (179 aa).

G48–S50 contacts L-glutamine. Residue C79 is the Nucleophile of the active site. L-glutamine-binding positions include R101 and I127–R128. Active-site charge relay system residues include H163 and E165.

The protein belongs to the glutaminase PdxT/SNO family. As to quaternary structure, in the presence of PdxS, forms a dodecamer of heterodimers. Only shows activity in the heterodimer.

The enzyme catalyses aldehydo-D-ribose 5-phosphate + D-glyceraldehyde 3-phosphate + L-glutamine = pyridoxal 5'-phosphate + L-glutamate + phosphate + 3 H2O + H(+). The catalysed reaction is L-glutamine + H2O = L-glutamate + NH4(+). Its pathway is cofactor biosynthesis; pyridoxal 5'-phosphate biosynthesis. Functionally, catalyzes the hydrolysis of glutamine to glutamate and ammonia as part of the biosynthesis of pyridoxal 5'-phosphate. The resulting ammonia molecule is channeled to the active site of PdxS. This is Pyridoxal 5'-phosphate synthase subunit PdxT from Francisella philomiragia subsp. philomiragia (strain ATCC 25017 / CCUG 19701 / FSC 153 / O#319-036).